Reading from the N-terminus, the 79-residue chain is Cytochrome b (79 aa).

3 helical membrane-spanning segments follow: residues 1 to 7 (SALFLAM), 31 to 52 (WLIRYIHANGASLFFICLYLHI), and 67 to 79 (WNIGIILLFLTMA). His-37 and His-51 together coordinate heme b.

This sequence belongs to the cytochrome b family. As to quaternary structure, the cytochrome bc1 complex contains 11 subunits: 3 respiratory subunits (MT-CYB, CYC1 and UQCRFS1), 2 core proteins (UQCRC1 and UQCRC2) and 6 low-molecular weight proteins (UQCRH/QCR6, UQCRB/QCR7, UQCRQ/QCR8, UQCR10/QCR9, UQCR11/QCR10 and a cleavage product of UQCRFS1). This cytochrome bc1 complex then forms a dimer. The cofactor is heme b.

The protein localises to the mitochondrion inner membrane. Functionally, component of the ubiquinol-cytochrome c reductase complex (complex III or cytochrome b-c1 complex) that is part of the mitochondrial respiratory chain. The b-c1 complex mediates electron transfer from ubiquinol to cytochrome c. Contributes to the generation of a proton gradient across the mitochondrial membrane that is then used for ATP synthesis. In Dipodomys panamintinus (Panamint kangaroo rat), this protein is Cytochrome b (MT-CYB).